A 361-amino-acid chain; its full sequence is Peptide chain release factor 1 (361 aa).

N5-methylglutamine is present on glutamine 235. Residues 283 to 306 (RSQQATAEAMTRKLQVGSGDRSQR) are disordered.

Belongs to the prokaryotic/mitochondrial release factor family. In terms of processing, methylated by PrmC. Methylation increases the termination efficiency of RF1.

Its subcellular location is the cytoplasm. Peptide chain release factor 1 directs the termination of translation in response to the peptide chain termination codons UAG and UAA. In Xylella fastidiosa (strain M23), this protein is Peptide chain release factor 1.